The sequence spans 412 residues: Chorismate synthase (412 aa).

NADP(+) contacts are provided by arginine 40 and arginine 46. FMN-binding positions include 135-137 (RAS), 256-257 (QA), glycine 300, 315-319 (KPIST), and arginine 341. Over residues 391-404 (QREPRQESSDEQPA) the composition is skewed to basic and acidic residues. The tract at residues 391-412 (QREPRQESSDEQPARRAANTAG) is disordered.

The protein belongs to the chorismate synthase family. As to quaternary structure, homotetramer. FMNH2 is required as a cofactor.

It catalyses the reaction 5-O-(1-carboxyvinyl)-3-phosphoshikimate = chorismate + phosphate. Its pathway is metabolic intermediate biosynthesis; chorismate biosynthesis; chorismate from D-erythrose 4-phosphate and phosphoenolpyruvate: step 7/7. Its function is as follows. Catalyzes the anti-1,4-elimination of the C-3 phosphate and the C-6 proR hydrogen from 5-enolpyruvylshikimate-3-phosphate (EPSP) to yield chorismate, which is the branch point compound that serves as the starting substrate for the three terminal pathways of aromatic amino acid biosynthesis. This reaction introduces a second double bond into the aromatic ring system. This chain is Chorismate synthase, found in Mycobacteroides abscessus (strain ATCC 19977 / DSM 44196 / CCUG 20993 / CIP 104536 / JCM 13569 / NCTC 13031 / TMC 1543 / L948) (Mycobacterium abscessus).